We begin with the raw amino-acid sequence, 448 residues long: tRNA modification GTPase MnmE (448 aa).

Arg24, Glu81, and Lys120 together coordinate (6S)-5-formyl-5,6,7,8-tetrahydrofolate. Positions 216 to 373 (GLNVVLVGAP…LKRTLLCEAG (158 aa)) constitute a TrmE-type G domain. Asn226 provides a ligand contact to K(+). Residues 226–231 (NVGKSS), 245–251 (TDIAGTT), and 270–273 (DTAG) each bind GTP. A Mg(2+)-binding site is contributed by Ser230. 3 residues coordinate K(+): Thr245, Ile247, and Thr250. Thr251 serves as a coordination point for Mg(2+). Lys448 is a binding site for (6S)-5-formyl-5,6,7,8-tetrahydrofolate.

Belongs to the TRAFAC class TrmE-Era-EngA-EngB-Septin-like GTPase superfamily. TrmE GTPase family. In terms of assembly, homodimer. Heterotetramer of two MnmE and two MnmG subunits. It depends on K(+) as a cofactor.

The protein resides in the cytoplasm. In terms of biological role, exhibits a very high intrinsic GTPase hydrolysis rate. Involved in the addition of a carboxymethylaminomethyl (cmnm) group at the wobble position (U34) of certain tRNAs, forming tRNA-cmnm(5)s(2)U34. This chain is tRNA modification GTPase MnmE, found in Neisseria gonorrhoeae (strain ATCC 700825 / FA 1090).